The following is a 489-amino-acid chain: Interferon gamma receptor 1 (489 aa).

The N-terminal stretch at 1–17 is a signal peptide; it reads MALLFLLPLVMQGVSRA. Over 18 to 245 the chain is Extracellular; sequence EMGTADLGPS…ITIFNSSIKG (228 aa). 3 N-linked (GlcNAc...) asparagine glycosylation sites follow: asparagine 34, asparagine 79, and asparagine 86. Cysteine 77 and cysteine 85 are joined by a disulfide. Cysteine 122 and cysteine 167 are oxidised to a cystine. Asparagine 179 is a glycosylation site (N-linked (GlcNAc...) asparagine). Intrachain disulfides connect cysteine 195–cysteine 200 and cysteine 214–cysteine 235. Residue asparagine 240 is glycosylated (N-linked (GlcNAc...) asparagine). The helical transmembrane segment at 246 to 266 threads the bilayer; sequence SLWIPVVAALLLFLVLSLVFI. The Cytoplasmic portion of the chain corresponds to 267–489; sequence CFYIKKINPL…RPTEDSKEFS (223 aa). Residues 329 to 437 are disordered; sequence ATVPGMHTED…SEFPPNNKGE (109 aa). Positions 335-348 are enriched in basic and acidic residues; the sequence is HTEDNPGKVEHTEE. Residues 349-360 show a composition bias toward polar residues; that stretch reads LSSITEVVTTEE. Residue serine 369 is modified to Phosphoserine. Threonine 372 carries the phosphothreonine modification. Serine 378 carries the phosphoserine modification. The segment covering 379–391 has biased composition (low complexity); that stretch reads SSPLSSNQSEPGS. Positions 401 to 412 are enriched in basic and acidic residues; the sequence is NCSESDHSRNGF. Serine 403 carries the post-translational modification Phosphoserine. Positions 415-429 are enriched in low complexity; it reads DSSCLESHSSLSDSE. Tyrosine 457 is modified (phosphotyrosine).

Belongs to the type II cytokine receptor family. As to quaternary structure, monomer. Heterodimer with IFNGR2, to form the IFNG receptor complex. Interacts with JAK1. Interacts (when phosphorylated) with STAT1. Interacts with SOCS1. Post-translationally, phosphorylated at Ser/Thr residues. Phosphorylation of Tyr-457 is required for IFNG receptor signal transduction. Influenza virus infection leads to phosphorylation in a CSNK1A1-dependent manner. In terms of processing, ubiquitinated after phosphorylation in a CSNK1A1-dependent manner, leading to the lysosome-dependent degradation. Proteasomally degraded through 'Lys-48'-mediated ubiquitination. Ubiquitination is necessary for efficient IFNGR1 signaling.

The protein localises to the cell membrane. In terms of biological role, receptor subunit for interferon gamma/INFG that plays crucial roles in antimicrobial, antiviral, and antitumor responses by activating effector immune cells and enhancing antigen presentation. Associates with transmembrane accessory factor IFNGR2 to form a functional receptor. Upon ligand binding, the intracellular domain of IFNGR1 opens out to allow association of downstream signaling components JAK1 and JAK2. In turn, activated JAK1 phosphorylates IFNGR1 to form a docking site for STAT1. Subsequent phosphorylation of STAT1 leads to dimerization, translocation to the nucleus, and stimulation of target gene transcription. STAT3 can also be activated in a similar manner although activation seems weaker. IFNGR1 intracellular domain phosphorylation also provides a docking site for SOCS1 that regulates the JAK-STAT pathway by competing with STAT1 binding to IFNGR1. The polypeptide is Interferon gamma receptor 1 (Homo sapiens (Human)).